The primary structure comprises 121 residues: MIKLRLKRFGKKKEASFRIVACNSTSRRDGRPLQELGFYNPRTKETRLDTEALRTRLTQGAQPTNVVRTLLEKGGLLEKTERPSIAIGKARLEKEKLAKAKTKDGDNDSSKAESESNEAET.

Residues 97–114 (LAKAKTKDGDNDSSKAES) show a composition bias toward basic and acidic residues. Positions 97 to 121 (LAKAKTKDGDNDSSKAESESNEAET) are disordered.

The protein belongs to the bacterial ribosomal protein bS16 family.

In Prochlorococcus marinus (strain MIT 9301), this protein is Small ribosomal subunit protein bS16.